A 301-amino-acid polypeptide reads, in one-letter code: MHVLRTPDSRFENLEDYPFVAHYLDVTARDTRPLRMHYLDEGPIDGPPIVLLHGEPTWSYLYRTMITPLTDAGNRVLAPDLIGFGRSDKPSRIEDYSYQRHVDWVVSWFEHLNLSDVTLFVQDWGSLIGLRIAAEQPDRVGRLVVANGFLPTAQRRTPPAFYAWRAFARYSPVLPAGRIVSVGTVRRVSSKVRAGYDAPFPDKTYQAGARAFPQLVPTSPADPAIPANRKAWEALGRWEKPFLAIFGARDPILGHADSPLIKHIPGAAGQPHARINASHFIQEDRGPELAERILSWQQALL.

Residues 47-284 (PPIVLLHGEP…INASHFIQED (238 aa)) enclose the AB hydrolase-1 domain. D123 acts as the Nucleophile in catalysis. D250 serves as the catalytic Proton donor. Catalysis depends on H279, which acts as the Proton acceptor.

It belongs to the haloalkane dehalogenase family. Type 1 subfamily. Monomer.

It carries out the reaction 1-haloalkane + H2O = a halide anion + a primary alcohol + H(+). Catalyzes hydrolytic cleavage of carbon-halogen bonds in halogenated aliphatic compounds, leading to the formation of the corresponding primary alcohols, halide ions and protons. The chain is Haloalkane dehalogenase from Mycolicibacterium paratuberculosis (strain ATCC BAA-968 / K-10) (Mycobacterium paratuberculosis).